Consider the following 292-residue polypeptide: Formamidopyrimidine-DNA glycosylase (292 aa).

P2 (schiff-base intermediate with DNA) is an active-site residue. The Proton donor role is filled by E3. The Proton donor; for beta-elimination activity role is filled by K60. The DNA site is built by H109, R128, and R173. The segment at 258-292 (NVYRRTGRECRKCGNLIERQKITGRSTHWCPNCQK) adopts an FPG-type zinc-finger fold. The Proton donor; for delta-elimination activity role is filled by R282.

It belongs to the FPG family. As to quaternary structure, monomer. Requires Zn(2+) as cofactor.

The catalysed reaction is Hydrolysis of DNA containing ring-opened 7-methylguanine residues, releasing 2,6-diamino-4-hydroxy-5-(N-methyl)formamidopyrimidine.. It catalyses the reaction 2'-deoxyribonucleotide-(2'-deoxyribose 5'-phosphate)-2'-deoxyribonucleotide-DNA = a 3'-end 2'-deoxyribonucleotide-(2,3-dehydro-2,3-deoxyribose 5'-phosphate)-DNA + a 5'-end 5'-phospho-2'-deoxyribonucleoside-DNA + H(+). Involved in base excision repair of DNA damaged by oxidation or by mutagenic agents. Acts as a DNA glycosylase that recognizes and removes damaged bases. Has a preference for oxidized purines, such as 7,8-dihydro-8-oxoguanine (8-oxoG). Has AP (apurinic/apyrimidinic) lyase activity and introduces nicks in the DNA strand. Cleaves the DNA backbone by beta-delta elimination to generate a single-strand break at the site of the removed base with both 3'- and 5'-phosphates. The sequence is that of Formamidopyrimidine-DNA glycosylase from Prochlorococcus marinus (strain MIT 9301).